A 313-amino-acid polypeptide reads, in one-letter code: tRNA dimethylallyltransferase (313 aa).

10–17 is a binding site for ATP; the sequence is GPTAVGKS. 12-17 is a binding site for substrate; it reads TAVGKS. Residues 35-38 form an interaction with substrate tRNA region; that stretch reads DSTQ.

It belongs to the IPP transferase family. As to quaternary structure, monomer. The cofactor is Mg(2+).

It catalyses the reaction adenosine(37) in tRNA + dimethylallyl diphosphate = N(6)-dimethylallyladenosine(37) in tRNA + diphosphate. Catalyzes the transfer of a dimethylallyl group onto the adenine at position 37 in tRNAs that read codons beginning with uridine, leading to the formation of N6-(dimethylallyl)adenosine (i(6)A). This Oceanobacillus iheyensis (strain DSM 14371 / CIP 107618 / JCM 11309 / KCTC 3954 / HTE831) protein is tRNA dimethylallyltransferase.